A 185-amino-acid chain; its full sequence is Ribosome-recycling factor (185 aa).

The protein belongs to the RRF family.

It is found in the cytoplasm. Its function is as follows. Responsible for the release of ribosomes from messenger RNA at the termination of protein biosynthesis. May increase the efficiency of translation by recycling ribosomes from one round of translation to another. This chain is Ribosome-recycling factor, found in Shewanella pealeana (strain ATCC 700345 / ANG-SQ1).